The chain runs to 465 residues: tRNA-2-methylthio-N(6)-dimethylallyladenosine synthase (465 aa).

The MTTase N-terminal domain occupies 5-125; sequence RKLHIKSYGC…LPELLKRAGN (121 aa). [4Fe-4S] cluster-binding residues include C14, C50, C88, C166, C170, and C173. The 233-residue stretch at 152-384 folds into the Radical SAM core domain; it reads RARGISAFVT…QELIDSQQSA (233 aa). The region spanning 387–449 is the TRAM domain; it reads KAAIGSTVDV…RYSFLGELVT (63 aa).

It belongs to the methylthiotransferase family. MiaB subfamily. As to quaternary structure, monomer. [4Fe-4S] cluster is required as a cofactor.

The protein localises to the cytoplasm. It carries out the reaction N(6)-dimethylallyladenosine(37) in tRNA + (sulfur carrier)-SH + AH2 + 2 S-adenosyl-L-methionine = 2-methylsulfanyl-N(6)-dimethylallyladenosine(37) in tRNA + (sulfur carrier)-H + 5'-deoxyadenosine + L-methionine + A + S-adenosyl-L-homocysteine + 2 H(+). Catalyzes the methylthiolation of N6-(dimethylallyl)adenosine (i(6)A), leading to the formation of 2-methylthio-N6-(dimethylallyl)adenosine (ms(2)i(6)A) at position 37 in tRNAs that read codons beginning with uridine. In Bradyrhizobium diazoefficiens (strain JCM 10833 / BCRC 13528 / IAM 13628 / NBRC 14792 / USDA 110), this protein is tRNA-2-methylthio-N(6)-dimethylallyladenosine synthase.